Reading from the N-terminus, the 352-residue chain is Hematopoietic SH2 domain-containing protein (352 aa).

In terms of domain architecture, SH2 spans W34 to C125. Disordered stretches follow at residues E157–T199 and V241–C352. Polar residues predominate over residues R180 to P191. A compositionally biased stretch (basic and acidic residues) spans P283 to R295. Residues Q343 to C352 show a composition bias toward pro residues.

Interacts with FES and TNK2. May be phosphorylated by FES and ACK1. As to expression, predominantly expressed in spleen and hematopoietic cells such as peripheral blood leukocytes and weakly expressed in prostate, thymus, heart, small intestine and placenta.

The protein resides in the cytoplasm. The protein localises to the nucleus. Its function is as follows. May be a modulator of the apoptotic response through its ability to affect mitochondrial stability. Adapter protein involved in tyrosine kinase and CD28 signaling. Seems to affect CD28-mediated activation of the RE/AP element of the interleukin-2 promoter. This is Hematopoietic SH2 domain-containing protein (HSH2D) from Homo sapiens (Human).